Here is a 247-residue protein sequence, read N- to C-terminus: Probable transcriptional regulatory protein PMT_1423 (247 aa).

The protein belongs to the TACO1 family.

The protein resides in the cytoplasm. This Prochlorococcus marinus (strain MIT 9313) protein is Probable transcriptional regulatory protein PMT_1423.